A 285-amino-acid chain; its full sequence is Probable endonuclease 4 (285 aa).

Zn(2+)-binding residues include histidine 69, histidine 109, glutamate 145, aspartate 179, histidine 182, histidine 216, aspartate 229, histidine 231, and glutamate 261.

Belongs to the AP endonuclease 2 family. The cofactor is Zn(2+).

It carries out the reaction Endonucleolytic cleavage to 5'-phosphooligonucleotide end-products.. Functionally, endonuclease IV plays a role in DNA repair. It cleaves phosphodiester bonds at apurinic or apyrimidinic (AP) sites, generating a 3'-hydroxyl group and a 5'-terminal sugar phosphate. This is Probable endonuclease 4 from Shigella dysenteriae serotype 1 (strain Sd197).